An 89-amino-acid polypeptide reads, in one-letter code: MSRSLKKGPYINVKLEKKVLAMNESGKKAVVKTWARASMISPDFVGHTIAVHNGNKFIPVFVTENMVGHKLGEFSPTRTFRGHAGNKKK.

This sequence belongs to the universal ribosomal protein uS19 family.

In terms of biological role, protein S19 forms a complex with S13 that binds strongly to the 16S ribosomal RNA. This Parabacteroides distasonis (strain ATCC 8503 / DSM 20701 / CIP 104284 / JCM 5825 / NCTC 11152) protein is Small ribosomal subunit protein uS19.